The chain runs to 648 residues: ABC transporter G family member 14 (648 aa).

The ABC transporter domain maps to Leu-53–Leu-304. Residue Gly-99 to Thr-106 participates in ATP binding. An N-linked (GlcNAc...) asparagine glycan is attached at Asn-346. The region spanning Tyr-384–Tyr-590 is the ABC transmembrane type-2 domain. A run of 7 helical transmembrane segments spans residues Leu-405–Pro-425, Leu-435–Phe-455, Leu-485–Leu-505, Phe-512–Ala-532, Ala-543–Val-562, Ile-569–Thr-591, and Leu-620–Met-640.

Belongs to the ABC transporter superfamily. ABCG family. Eye pigment precursor importer (TC 3.A.1.204) subfamily. Forms heterodimers with ABCG11. In terms of tissue distribution, accumulates primarily in the pericycle and stelar cells of roots. Expressed in leaves, stems, flowers and siliques, and, at low levels, in roots. Accumulates in the phloem.

The protein localises to the cell membrane. Functionally, positive regulator of plant growth which acts as an efflux pump involved in the major root-to-shoot (acropetal) long-distance cytokinin (CK) transport via the xylem sap. Together with ABCG9 and ABCG11, required for vascular development by regulating lipid/sterol homeostasis. Involved in CK-dependent responses to oxidative stress such as hydrogen peroxide H(2)O(2). In terms of biological role, (Microbial infection) Required for SNC1-mediated defense response against the virulent pathogen Pseudomonas syringae pv. tomato DC3000 by promoting the accumulation of trans-zeatin (tZ)-type cytokinins (CK) in the shoot. In Arabidopsis thaliana (Mouse-ear cress), this protein is ABC transporter G family member 14.